The chain runs to 498 residues: ATP synthase subunit beta, chloroplastic (498 aa).

172–179 contacts ATP; sequence GGAGVGKT.

The protein belongs to the ATPase alpha/beta chains family. In terms of assembly, F-type ATPases have 2 components, CF(1) - the catalytic core - and CF(0) - the membrane proton channel. CF(1) has five subunits: alpha(3), beta(3), gamma(1), delta(1), epsilon(1). CF(0) has four main subunits: a(1), b(1), b'(1) and c(9-12).

It localises to the plastid. The protein resides in the chloroplast thylakoid membrane. It carries out the reaction ATP + H2O + 4 H(+)(in) = ADP + phosphate + 5 H(+)(out). In terms of biological role, produces ATP from ADP in the presence of a proton gradient across the membrane. The catalytic sites are hosted primarily by the beta subunits. This chain is ATP synthase subunit beta, chloroplastic, found in Salacca zalacca (Snake palm).